Here is a 310-residue protein sequence, read N- to C-terminus: Protoheme IX farnesyltransferase (310 aa).

9 helical membrane-spanning segments follow: residues 21-43 (LLKPRVMSLVVFTALVGLLVAPV), 48-70 (MIALTGILFIALGAGASGALNMW), 95-115 (GEALGIGLALSGIAVVMLGLA), 118-138 (LFAAGLLAFTIFFYAVVYSMW), 147-167 (IVIGGAAGAFPPMIGWAVATG), 174-194 (LFMFALIFMWTPPHFWSLALF), 220-240 (VLVYSLLLAPLAVAGAFTGIG), 243-263 (LYLATALALNGWLLVGAVRIW), and 289-309 (LFLHFGAILAEAALKPYGLGG).

Belongs to the UbiA prenyltransferase family. Protoheme IX farnesyltransferase subfamily. As to quaternary structure, interacts with CtaA.

Its subcellular location is the cell inner membrane. The enzyme catalyses heme b + (2E,6E)-farnesyl diphosphate + H2O = Fe(II)-heme o + diphosphate. Its pathway is porphyrin-containing compound metabolism; heme O biosynthesis; heme O from protoheme: step 1/1. Converts heme B (protoheme IX) to heme O by substitution of the vinyl group on carbon 2 of heme B porphyrin ring with a hydroxyethyl farnesyl side group. This chain is Protoheme IX farnesyltransferase, found in Cereibacter sphaeroides (strain KD131 / KCTC 12085) (Rhodobacter sphaeroides).